We begin with the raw amino-acid sequence, 546 residues long: Chaperonin GroEL (546 aa).

ATP contacts are provided by residues 30–33 (TLGP), Lys-51, 87–91 (DGTTT), Gly-415, 479–481 (NAA), and Asp-495.

Belongs to the chaperonin (HSP60) family. Forms a cylinder of 14 subunits composed of two heptameric rings stacked back-to-back. Interacts with the co-chaperonin GroES.

Its subcellular location is the cytoplasm. It catalyses the reaction ATP + H2O + a folded polypeptide = ADP + phosphate + an unfolded polypeptide.. Together with its co-chaperonin GroES, plays an essential role in assisting protein folding. The GroEL-GroES system forms a nano-cage that allows encapsulation of the non-native substrate proteins and provides a physical environment optimized to promote and accelerate protein folding. In Paraburkholderia phytofirmans (strain DSM 17436 / LMG 22146 / PsJN) (Burkholderia phytofirmans), this protein is Chaperonin GroEL.